A 246-amino-acid polypeptide reads, in one-letter code: Zinc import ATP-binding protein ZnuC (246 aa).

An ABC transporter domain is found at 24-244; sequence LKIENLALAY…TLGEIFSSYI (221 aa). Residue 56–63 coordinates ATP; sequence GPNGGGKT.

The protein belongs to the ABC transporter superfamily. Zinc importer (TC 3.A.1.15.5) family. As to quaternary structure, the complex is composed of two ATP-binding proteins (ZnuC), two transmembrane proteins (ZnuB) and a solute-binding protein (ZnuA).

The protein localises to the cell membrane. The catalysed reaction is Zn(2+)(out) + ATP(in) + H2O(in) = Zn(2+)(in) + ADP(in) + phosphate(in) + H(+)(in). Part of the ABC transporter complex ZnuABC involved in zinc import. Responsible for energy coupling to the transport system. The protein is Zinc import ATP-binding protein ZnuC of Wolbachia sp. subsp. Brugia malayi (strain TRS).